A 122-amino-acid chain; its full sequence is Large ribosomal subunit protein uL14 (122 aa).

This sequence belongs to the universal ribosomal protein uL14 family. In terms of assembly, part of the 50S ribosomal subunit. Forms a cluster with proteins L3 and L19. In the 70S ribosome, L14 and L19 interact and together make contacts with the 16S rRNA in bridges B5 and B8.

In terms of biological role, binds to 23S rRNA. Forms part of two intersubunit bridges in the 70S ribosome. The chain is Large ribosomal subunit protein uL14 from Lactobacillus delbrueckii subsp. bulgaricus (strain ATCC BAA-365 / Lb-18).